A 441-amino-acid polypeptide reads, in one-letter code: Zinc finger and BTB domain-containing protein 8A (441 aa).

The BTB domain occupies 24–92 (CDCSILVEGK…VYSGKLSLTG (69 aa)). The tract at residues 135 to 248 (LSDKDTGSNG…HVSQSEEQVQ (114 aa)) is disordered. Residues Ser161 and Ser167 each carry the phosphoserine modification. Glycyl lysine isopeptide (Lys-Gly) (interchain with G-Cter in SUMO2) cross-links involve residues Lys178, Lys182, and Lys199. 2 stretches are compositionally biased toward basic and acidic residues: residues 198 to 208 (AKHEQRKDPIK) and 227 to 242 (GKGD…HVSQ). C2H2-type zinc fingers lie at residues 282-304 (FKCP…LRCH) and 310-333 (YPCQ…RTIH). Lys437 participates in a covalent cross-link: Glycyl lysine isopeptide (Lys-Gly) (interchain with G-Cter in SUMO2).

It is found in the nucleus. May be involved in transcriptional regulation. This Rattus norvegicus (Rat) protein is Zinc finger and BTB domain-containing protein 8A (Zbtb8a).